The sequence spans 220 residues: Photosynthetic NDH subunit of lumenal location 3, chloroplastic (220 aa).

Residues 1–35 constitute a chloroplast transit peptide; the sequence is MAHFIDLNSLTNTLPSLPKLPESRKTGKSSGFACR. A thylakoid-targeting transit peptide spans 36-77; sequence RTEEFQEPDSVQITRRMTLGFAVSIGLTGILGENNVSLAQDN.

The protein belongs to the PsbQ family. As to quaternary structure, part of the chloroplast NDH complex, composed of a mixture of chloroplast and nucleus encoded subunits. Component of the NDH lumenal subcomplex, at least composed of PnsL1, PnsL2, PnsL3, PnsL4 and PnsL5.

The protein localises to the plastid. The protein resides in the chloroplast thylakoid membrane. NDH shuttles electrons from NAD(P)H:plastoquinone, via FMN and iron-sulfur (Fe-S) centers, to quinones in the photosynthetic chain and possibly in a chloroplast respiratory chain. The immediate electron acceptor for the enzyme in this species is believed to be plastoquinone. Couples the redox reaction to proton translocation, and thus conserves the redox energy in a proton gradient. Required for both formation and activity of the chloroplast NAD(P)H dehydrogenase (NDH) complex. In Arabidopsis thaliana (Mouse-ear cress), this protein is Photosynthetic NDH subunit of lumenal location 3, chloroplastic.